Consider the following 315-residue polypeptide: Ribose-phosphate pyrophosphokinase (315 aa).

ATP contacts are provided by residues 37 to 39 and 96 to 97; these read DGE and RQ. Mg(2+) contacts are provided by His-131 and Asp-170. Lys-194 is a catalytic residue. D-ribose 5-phosphate-binding positions include Arg-196, Asp-220, and 224-228; that span reads DTGGT.

Belongs to the ribose-phosphate pyrophosphokinase family. Class I subfamily. In terms of assembly, homohexamer. Requires Mg(2+) as cofactor.

The protein localises to the cytoplasm. The enzyme catalyses D-ribose 5-phosphate + ATP = 5-phospho-alpha-D-ribose 1-diphosphate + AMP + H(+). It participates in metabolic intermediate biosynthesis; 5-phospho-alpha-D-ribose 1-diphosphate biosynthesis; 5-phospho-alpha-D-ribose 1-diphosphate from D-ribose 5-phosphate (route I): step 1/1. In terms of biological role, involved in the biosynthesis of the central metabolite phospho-alpha-D-ribosyl-1-pyrophosphate (PRPP) via the transfer of pyrophosphoryl group from ATP to 1-hydroxyl of ribose-5-phosphate (Rib-5-P). The protein is Ribose-phosphate pyrophosphokinase of Photorhabdus laumondii subsp. laumondii (strain DSM 15139 / CIP 105565 / TT01) (Photorhabdus luminescens subsp. laumondii).